The sequence spans 358 residues: 4-hydroxy-2-oxovalerate aldolase 2 (358 aa).

In terms of domain architecture, Pyruvate carboxyltransferase spans 16–268; it reads VLLHDMCLRD…ETGVDLFKLM (253 aa). 24–25 lines the substrate pocket; that stretch reads RD. Residue D25 participates in Mn(2+) binding. Residue H28 is the Proton acceptor of the active site. Residues S178 and H207 each contribute to the substrate site. 2 residues coordinate Mn(2+): H207 and H209. Y298 serves as a coordination point for substrate.

This sequence belongs to the 4-hydroxy-2-oxovalerate aldolase family.

The catalysed reaction is (S)-4-hydroxy-2-oxopentanoate = acetaldehyde + pyruvate. The polypeptide is 4-hydroxy-2-oxovalerate aldolase 2 (Methylibium petroleiphilum (strain ATCC BAA-1232 / LMG 22953 / PM1)).